Here is an 85-residue protein sequence, read N- to C-terminus: Protein 19.2 (85 aa).

The sequence is that of Protein 19.2 from Escherichia coli (Bacteriophage T7).